Here is a 148-residue protein sequence, read N- to C-terminus: FAD synthase (148 aa).

Residues 5-6 (TF), 10-13 (HPGH), aspartate 92, and tyrosine 119 contribute to the ATP site.

The protein belongs to the archaeal FAD synthase family. As to quaternary structure, homodimer. A divalent metal cation serves as cofactor.

It carries out the reaction FMN + ATP + H(+) = FAD + diphosphate. It participates in cofactor biosynthesis; FAD biosynthesis; FAD from FMN: step 1/1. Catalyzes the transfer of the AMP portion of ATP to flavin mononucleotide (FMN) to produce flavin adenine dinucleotide (FAD) coenzyme. The chain is FAD synthase from Methanosphaera stadtmanae (strain ATCC 43021 / DSM 3091 / JCM 11832 / MCB-3).